The sequence spans 273 residues: Orotidine 5'-phosphate decarboxylase (273 aa).

Lys-95 serves as the catalytic Proton donor.

The protein belongs to the OMP decarboxylase family. Type 2 subfamily.

It carries out the reaction orotidine 5'-phosphate + H(+) = UMP + CO2. It functions in the pathway pyrimidine metabolism; UMP biosynthesis via de novo pathway; UMP from orotate: step 2/2. In Bordetella bronchiseptica (strain ATCC BAA-588 / NCTC 13252 / RB50) (Alcaligenes bronchisepticus), this protein is Orotidine 5'-phosphate decarboxylase.